The following is a 507-amino-acid chain: Histidine ammonia-lyase (507 aa).

The 5-imidazolinone (Ala-Gly) cross-link spans 141–143 (ASG). A 2,3-didehydroalanine (Ser) modification is found at S142.

This sequence belongs to the PAL/histidase family. In terms of processing, contains an active site 4-methylidene-imidazol-5-one (MIO), which is formed autocatalytically by cyclization and dehydration of residues Ala-Ser-Gly.

The protein resides in the cytoplasm. The catalysed reaction is L-histidine = trans-urocanate + NH4(+). It participates in amino-acid degradation; L-histidine degradation into L-glutamate; N-formimidoyl-L-glutamate from L-histidine: step 1/3. This is Histidine ammonia-lyase from Paraburkholderia phytofirmans (strain DSM 17436 / LMG 22146 / PsJN) (Burkholderia phytofirmans).